The sequence spans 211 residues: FMN-dependent NADH:quinone oxidoreductase 2 (211 aa).

Met-102–Phe-105 contributes to the FMN binding site.

This sequence belongs to the azoreductase type 1 family. As to quaternary structure, homodimer. It depends on FMN as a cofactor.

It catalyses the reaction 2 a quinone + NADH + H(+) = 2 a 1,4-benzosemiquinone + NAD(+). The catalysed reaction is N,N-dimethyl-1,4-phenylenediamine + anthranilate + 2 NAD(+) = 2-(4-dimethylaminophenyl)diazenylbenzoate + 2 NADH + 2 H(+). Quinone reductase that provides resistance to thiol-specific stress caused by electrophilic quinones. Functionally, also exhibits azoreductase activity. Catalyzes the reductive cleavage of the azo bond in aromatic azo compounds to the corresponding amines. This Bacillus thuringiensis subsp. konkukian (strain 97-27) protein is FMN-dependent NADH:quinone oxidoreductase 2.